The primary structure comprises 490 residues: RNA-binding post-transcriptional regulator cip1 (490 aa).

Disordered stretches follow at residues 16 to 63 (RGLA…GSSA), 76 to 97 (ASSR…YSQL), and 138 to 199 (HNVS…GEDT). The segment covering 34–62 (RLQSPLNSPKLQPIGSPQASRKTSGSGSS) has biased composition (polar residues). Phosphoserine is present on residues serine 37, serine 41, serine 49, serine 86, and serine 141. 2 stretches are compositionally biased toward low complexity: residues 76-88 (ASSR…PSDS) and 141-160 (SPPS…ASGK). Polar residues predominate over residues 164–192 (ADTSAEPSLDAFNSTQIKAGSTANSNSTP). Residues 202–280 (TAIVVKNIPF…RRLRVEWKRQ (79 aa)) form the RRM domain. 3 positions are modified to phosphoserine: serine 397, serine 401, and serine 427. A Phosphothreonine modification is found at threonine 431. A phosphoserine mark is found at serine 435, serine 456, and serine 466. Positions 457-490 (PLQKASTLSSPFNSKNDNDASTSASKQSFGVSHF) are disordered.

In terms of assembly, interacts with csx1. Post-translationally, phosphorylated by sty1.

The protein localises to the cytoplasm. Functionally, regulates global gene expression after oxidative stress. Interacts and stabilizes mRNAs and may regulate their transition between different cytoplasmic components after oxidative stress. In Schizosaccharomyces pombe (strain 972 / ATCC 24843) (Fission yeast), this protein is RNA-binding post-transcriptional regulator cip1 (cip1).